The chain runs to 713 residues: Polyribonucleotide nucleotidyltransferase (713 aa).

2 residues coordinate Mg(2+): Asp494 and Asp500. The KH domain occupies 561–623 (PSFSTMTIPK…EAVQSAEKRV (63 aa)). The 70-residue stretch at 633-702 (GDVYQGTVKS…KSGKYKLSRK (70 aa)) folds into the S1 motif domain.

It belongs to the polyribonucleotide nucleotidyltransferase family. Mg(2+) serves as cofactor.

It localises to the cytoplasm. It carries out the reaction RNA(n+1) + phosphate = RNA(n) + a ribonucleoside 5'-diphosphate. Involved in mRNA degradation. Catalyzes the phosphorolysis of single-stranded polyribonucleotides processively in the 3'- to 5'-direction. This Amoebophilus asiaticus (strain 5a2) protein is Polyribonucleotide nucleotidyltransferase.